We begin with the raw amino-acid sequence, 90 residues long: Putative sodium channel toxin Ts35 (90 aa).

A signal peptide spans 1 to 22 (QDEVGLGSCSVIFVVGNEEGEA). Residues 23 to 87 (KDGYAVGGDR…WGNPTLGPCL (65 aa)) enclose the LCN-type CS-alpha/beta domain. Intrachain disulfides connect cysteine 33–cysteine 86, cysteine 37–cysteine 61, cysteine 46–cysteine 66, and cysteine 50–cysteine 68.

This sequence belongs to the long (4 C-C) scorpion toxin superfamily. Sodium channel inhibitor family. Expressed by the venom gland.

The protein localises to the secreted. Functionally, putative sodium channel toxin. The protein is Putative sodium channel toxin Ts35 of Tityus serrulatus (Brazilian scorpion).